A 427-amino-acid polypeptide reads, in one-letter code: Trigger factor (427 aa).

One can recognise a PPIase FKBP-type domain in the interval 163 to 248; it reads GDTVVIDFVG…VNEVKAKELP (86 aa).

This sequence belongs to the FKBP-type PPIase family. Tig subfamily.

It is found in the cytoplasm. It carries out the reaction [protein]-peptidylproline (omega=180) = [protein]-peptidylproline (omega=0). Functionally, involved in protein export. Acts as a chaperone by maintaining the newly synthesized protein in an open conformation. Functions as a peptidyl-prolyl cis-trans isomerase. The polypeptide is Trigger factor (Lactococcus lactis subsp. cremoris (strain SK11)).